The primary structure comprises 1673 residues: NBPF family member NBPF26 (1673 aa).

EGF-like domains lie at 24–63 (HALQCRDGYEPCVNKGMCVTYHSGTGYCKCPEGFLGEYCQ), 64–102 (HRDPCEKNRCQNGGTCVAQAMLGKATCRCASGFTGEDCQ), 105–143 (TPHPCFVSRPCLNGGTCHMLSRDTYECTCQVGFTGKECQ), and 144–180 (WTDACLSHLCANGSTCTTVANQFSCKCLTGFTGQKCE). 17 disulfide bridges follow: cysteine 28–cysteine 41, cysteine 35–cysteine 51, cysteine 53–cysteine 62, cysteine 68–cysteine 79, cysteine 73–cysteine 90, cysteine 92–cysteine 101, cysteine 109–cysteine 121, cysteine 115–cysteine 131, cysteine 133–cysteine 142, cysteine 148–cysteine 159, cysteine 153–cysteine 168, cysteine 170–cysteine 179, cysteine 186–cysteine 198, cysteine 192–cysteine 207, cysteine 209–cysteine 218, cysteine 225–cysteine 236, and cysteine 230–cysteine 246. The EGF-like 5; calcium-binding domain occupies 182 to 219 (DVNECDIPGHCQHGGTCLNLPGSYQCQCLQGFTGQYCD). The region spanning 221–258 (LYVPCAHSPCVNGGTCRQTGDFTFECNCLPVPDSTSSA) is the EGF-like 6 domain. Residues 337 to 381 (RQFKEEKLAEQLKQAEELRQYKVLVHSQERELTQLKEKLREGRDA) are a coiled coil. Disordered stretches follow at residues 423–463 (KLSP…KVPE), 713–734 (EKVQKSSAPREMQKAEEKEVPE), and 782–828 (WEDA…EGYS). The span at 427–443 (ENDEDEDEDVQVEEDEK) shows a compositional bias: acidic residues. 13 Olduvai domains span residues 427–521 (ENDE…NILP), 698–790 (ENDN…HIIP), 791–879 (ENES…ATGP), 882–937 (SREL…VDMD), 938–1029 (EIEK…PSCP), 1032–1104 (SGEL…PSCP), 1107–1162 (SREL…LDVD), 1163–1255 (RIKK…RSKK), 1256–1348 (ERRR…PSCP), 1351–1423 (SREL…PSCP), 1426–1481 (SREL…LDVD), 1482–1574 (RIKK…RSKK), and 1575–1673 (ERRR…IFPQ). Over residues 452 to 463 (EVQKTEESKVPE) the composition is skewed to basic and acidic residues. Acidic residues-rich tracts occupy residues 792–801 (NESDDEEEEE) and 812–824 (ESEEEEVPQESWD). A disordered region spans residues 1242–1280 (KGKGKKRRGRRSKKERRRGRKEGEEDQNPPCPRLSRELL). The segment covering 1243–1261 (GKGKKRRGRRSKKERRRGR) has biased composition (basic residues). The interval 1561–1594 (KGKGKKRRGRRSKKERRRGRKEGEEDQNPPCPRL) is disordered. A compositionally biased stretch (basic residues) spans 1562–1580 (GKGKKRRGRRSKKERRRGR).

It belongs to the NBPF family.

The protein resides in the cytoplasm. This Homo sapiens (Human) protein is NBPF family member NBPF26.